The following is a 145-amino-acid chain: Class I hydrophobin rodE (145 aa).

Intrachain disulfides connect C43-C126, C59-C120, C60-C95, and C127-C140.

The protein belongs to the fungal hydrophobin family. Self-assembles to form functional amyloid fibrils called rodlets. Self-assembly into fibrillar rodlets occurs spontaneously at hydrophobic:hydrophilic interfaces and the rodlets further associate laterally to form amphipathic monolayers.

Aerial growth, conidiation, and dispersal of filamentous fungi in the environment rely upon a capability of their secreting small amphipathic proteins called hydrophobins (HPBs) with low sequence identity. Class I can self-assemble into an outermost layer of rodlet bundles on aerial cell surfaces, conferring cellular hydrophobicity that supports fungal growth, development and dispersal; whereas Class II form highly ordered films at water-air interfaces through intermolecular interactions but contribute nothing to the rodlet structure. RodE is a class I hydrophobin that, unlike rodA, is not required for rodlet formation. The sequence is that of Class I hydrophobin rodE from Aspergillus fumigatus (strain ATCC MYA-4609 / CBS 101355 / FGSC A1100 / Af293) (Neosartorya fumigata).